Here is a 224-residue protein sequence, read N- to C-terminus: Uracil-DNA glycosylase 2 (224 aa).

Residue aspartate 64 is the Proton acceptor of the active site.

This sequence belongs to the uracil-DNA glycosylase (UDG) superfamily. UNG family.

Its subcellular location is the cytoplasm. The enzyme catalyses Hydrolyzes single-stranded DNA or mismatched double-stranded DNA and polynucleotides, releasing free uracil.. Its function is as follows. Excises uracil residues from the DNA which can arise as a result of misincorporation of dUMP residues by DNA polymerase or due to deamination of cytosine. The chain is Uracil-DNA glycosylase 2 from Listeria innocua serovar 6a (strain ATCC BAA-680 / CLIP 11262).